The following is a 986-amino-acid chain: Vacuolar membrane protease (986 aa).

Residues 1 to 20 (MATPRAQKFNPIAFTPGPVT) lie on the Cytoplasmic side of the membrane. Residues 21 to 41 (LITTIVYLALLIPILVISLVV) traverse the membrane as a helical segment. Residues 42 to 392 (PPAPETSPEG…AFAVFRLHTL (351 aa)) are Vacuolar-facing. N-linked (GlcNAc...) asparagine glycans are attached at residues Asn-53, Asn-116, and Asn-119. Positions 175 and 187 each coordinate Zn(2+). Glu-221 (proton acceptor) is an active-site residue. Glu-222 lines the Zn(2+) pocket. N-linked (GlcNAc...) asparagine glycosylation is present at Asn-238. Positions 247 and 320 each coordinate Zn(2+). Residues 393–413 (FALSVTLLIVAPLVIFITAIV) traverse the membrane as a helical segment. The Cytoplasmic portion of the chain corresponds to 414-447 (LSKTDRMYLFSMSKSLGGTDERVSLRGLRGLFRT). Residues 448–468 (PIILAVATVIPIGLAYLLEKV) traverse the membrane as a helical segment. Over 469–477 (NPYIVHSSQ) the chain is Vacuolar. The chain crosses the membrane as a helical span at residues 478 to 498 (FSVWSMMISVWIFLAWFLACA). The Cytoplasmic segment spans residues 499-509 (ADFFRPSALHR). Residues 510 to 530 (AYSYTWIFIATWVMLVINTVY) form a helical membrane-spanning segment. At 531 to 534 (ANQK) the chain is on the vacuolar side. A helical membrane pass occupies residues 535-555 (GIAAGYFVFFYFSGSFLATWV). Over 556–665 (SYLELFALPR…WSWTLPRWTW (110 aa)) the chain is Cytoplasmic. The segment at 595–620 (ELPSDTGPHAEYPGDADETDPTESTS) is disordered. The chain crosses the membrane as a helical span at residues 666–686 (VLQLLLLAPIVLILVGQLALF). The Vacuolar portion of the chain corresponds to 687–702 (LTTSMSQVGSDGVSTF). A helical transmembrane segment spans residues 703-723 (IVYLACAVFTTLLFAPLFPFI). At 724-729 (HRFTYH) the chain is on the cytoplasmic side. Residues 730-750 (IPTFLFLVFVGTLIYNLVAFP) form a helical membrane-spanning segment. At 751–986 (FSPANRLKMF…VEASHGITIQ (236 aa)) the chain is on the vacuolar side. Residues Asn-797, Asn-840, and Asn-948 are each glycosylated (N-linked (GlcNAc...) asparagine).

The protein belongs to the peptidase M28 family. Zn(2+) serves as cofactor.

The protein resides in the vacuole membrane. Its function is as follows. May be involved in vacuolar sorting and osmoregulation. This Blastomyces gilchristii (strain SLH14081) (Blastomyces dermatitidis) protein is Vacuolar membrane protease.